We begin with the raw amino-acid sequence, 642 residues long: Threonine--tRNA ligase (642 aa).

The TGS domain occupies 1–61 (MPVITLPDGS…ESDAQLAIIT (61 aa)). The interval 243-534 (DHRKIGKQLD…LTEEYAGFYP (292 aa)) is catalytic. 3 residues coordinate Zn(2+): C334, H385, and H511.

The protein belongs to the class-II aminoacyl-tRNA synthetase family. In terms of assembly, homodimer. It depends on Zn(2+) as a cofactor.

It localises to the cytoplasm. The enzyme catalyses tRNA(Thr) + L-threonine + ATP = L-threonyl-tRNA(Thr) + AMP + diphosphate + H(+). Catalyzes the attachment of threonine to tRNA(Thr) in a two-step reaction: L-threonine is first activated by ATP to form Thr-AMP and then transferred to the acceptor end of tRNA(Thr). Also edits incorrectly charged L-seryl-tRNA(Thr). The chain is Threonine--tRNA ligase from Serratia proteamaculans (strain 568).